The chain runs to 1030 residues: Pro-apoptotic serine protease NMA111 (1030 aa).

The interval Met-1–Glu-48 is disordered. Residues Lys-15–Arg-24 are compositionally biased toward basic and acidic residues. A serine protease region spans residues Val-89–Leu-279. Residues His-127, Asp-158, and Ser-240 each act as charge relay system in the active site. PDZ domains are found at residues Pro-312–Gly-384 and Ala-880–Met-960.

It belongs to the peptidase S1C family.

It is found in the nucleus. Its function is as follows. Nuclear serine protease which mediates apoptosis. The sequence is that of Pro-apoptotic serine protease NMA111 (NMA111) from Chaetomium globosum (strain ATCC 6205 / CBS 148.51 / DSM 1962 / NBRC 6347 / NRRL 1970) (Soil fungus).